The sequence spans 433 residues: MSISIETLEGLQRRVTITVAADKIEAAYKEQLKGYAKNARVDGFRKGKVPHAIIEQRFGLAARQDVLSDEMQRAFFDAVIAEKINLAGRPTFTPNNYQPSQEFSFTATFEVFPEVELKGLENIEVEKPVVEITEADLDKMIDVLRKQQATWAESQAAAQAEDRVVIDFVGSVDGEEFEGGKATDFTLAMGQSRMIPGFEEGIVGHKAGEQFDIDVTFPEEYHAENLKGKAAKFAITLKKVENIVLPELTEEFVKKFGSAKTVEDLRAEIKKNMQRELKNAVTARVKNQVINGLIAQNEIEVPAAAVAEEVDVLRRQAVQRFGGKPEMAAQLPAELFEADAKRRVQVGLLLSTVIGTNELKVDEKRVEETIAEIASAYEQPAEVVAHYAKNRQLTENIRNVVLEEQAVEVVLAKAKVTEKATSFDEVMAQQAQG.

Positions 161–246 (EDRVVIDFVG…LKKVENIVLP (86 aa)) constitute a PPIase FKBP-type domain.

Belongs to the FKBP-type PPIase family. Tig subfamily.

Its subcellular location is the cytoplasm. The catalysed reaction is [protein]-peptidylproline (omega=180) = [protein]-peptidylproline (omega=0). Involved in protein export. Acts as a chaperone by maintaining the newly synthesized protein in an open conformation. Functions as a peptidyl-prolyl cis-trans isomerase. This chain is Trigger factor, found in Actinobacillus pleuropneumoniae serotype 7 (strain AP76).